The sequence spans 339 residues: Ribosomal RNA small subunit methyltransferase H (339 aa).

S-adenosyl-L-methionine contacts are provided by residues 52–54, aspartate 71, phenylalanine 98, aspartate 130, and glutamine 137; that span reads GGH.

This sequence belongs to the methyltransferase superfamily. RsmH family.

The protein resides in the cytoplasm. It catalyses the reaction cytidine(1402) in 16S rRNA + S-adenosyl-L-methionine = N(4)-methylcytidine(1402) in 16S rRNA + S-adenosyl-L-homocysteine + H(+). Functionally, specifically methylates the N4 position of cytidine in position 1402 (C1402) of 16S rRNA. The protein is Ribosomal RNA small subunit methyltransferase H of Corynebacterium diphtheriae (strain ATCC 700971 / NCTC 13129 / Biotype gravis).